A 513-amino-acid polypeptide reads, in one-letter code: U3 small nucleolar RNA-associated protein 15 (513 aa).

WD repeat units lie at residues 37 to 78 (KEHN…KTFS), 79 to 118 (RFKDVVYSASFRSDGKLLCAGDATGLVSVYDSYNPRTILL), 124 to 162 (THPTHVTKFHTQDNKILATASDDRVTRLWDISNAYEPQL), 166 to 206 (GATD…STPI), 210 to 247 (NHDQPVENVIAVSPTQIVSCGGNNFKVWDLTSNKKLYE), and 250 to 294 (NFNK…QVKF). The interval 332–354 (KKKEKRSSDKENAPASFNKNAKS) is disordered.

Interacts with snoRNA U3. Interacts with MPP10. Component of the ribosomal small subunit (SSU) processome composed of at least 40 protein subunits and snoRNA U3. In the absence of snoRNA3, forms a complex with other t-UTPs. This complex can associate with pre-18S ribosomal RNAs.

Its subcellular location is the nucleus. The protein resides in the nucleolus. Its function is as follows. Involved in nucleolar processing of pre-18S ribosomal RNA. Required for optimal pre-ribosomal RNA transcription by RNA polymerase I together with a subset of U3 proteins required for transcription (t-UTPs). The protein is U3 small nucleolar RNA-associated protein 15 (UTP15) of Saccharomyces cerevisiae (strain ATCC 204508 / S288c) (Baker's yeast).